Consider the following 598-residue polypeptide: Torsin-1A-interacting protein 1 (598 aa).

Residues 1 to 351 (MAGEGRRAEA…PQNASFVKRN (351 aa)) are Nuclear-facing. Disordered stretches follow at residues 19–254 (VTPR…RSSS) and 267–314 (QNFT…IYGS). Residue serine 60 is modified to Phosphoserine. Composition is skewed to basic and acidic residues over residues 73–101 (LVDK…EVRE) and 115–124 (RPQEAEEMKT). 6 positions are modified to phosphoserine: serine 135, serine 143, serine 154, serine 156, serine 157, and serine 187. Polar residues predominate over residues 205–214 (EATSVQQKVN). Serine 216 is subject to Phosphoserine. Residue threonine 221 is modified to Phosphothreonine. Phosphoserine occurs at positions 227, 230, and 242. A compositionally biased stretch (basic and acidic residues) spans 238–250 (RSRDSDESGDKTT). Polar residues-rich tracts occupy residues 277-287 (SVLSSGYQKTP) and 300-313 (RMQT…SIYG). Position 320 is a phosphoserine (serine 320). Positions 322–341 (LKSELGNQSPSTSSQQVTGQ) are disordered. A Glycyl lysine isopeptide (Lys-Gly) (interchain with G-Cter in SUMO2) cross-link involves residue lysine 323. The segment covering 326–341 (LGNQSPSTSSQQVTGQ) has biased composition (polar residues). A Phosphoserine modification is found at serine 330. The helical transmembrane segment at 352-372 (WWWLLPLIAALASGSFWFFST) threads the bilayer. The interaction with TOR1A stretch occupies residues 371 to 598 (STPEVETTAV…ENALKRGICL (228 aa)). Residues 373–598 (PEVETTAVQE…ENALKRGICL (226 aa)) lie on the Perinuclear space side of the membrane. Positions 374–450 (EVETTAVQEF…SEQIADAYSS (77 aa)) form a coiled coil. Asparagine 414 carries an N-linked (GlcNAc...) asparagine glycan.

It belongs to the TOR1AIP family. Interacts with ATP1B4. Interacts with TOR1A (ATP-bound). Interacts with TOR1B, TOR2A and TOR3A.

It localises to the nucleus inner membrane. Functionally, required for nuclear membrane integrity. Induces TOR1A and TOR1B ATPase activity and is required for their location on the nuclear membrane. Binds to A- and B-type lamins. Possible role in membrane attachment and assembly of the nuclear lamina. This is Torsin-1A-interacting protein 1 (TOR1AIP1) from Pongo abelii (Sumatran orangutan).